A 113-amino-acid chain; its full sequence is Nucleoid-associated protein Csac_1593 (113 aa).

This sequence belongs to the YbaB/EbfC family. As to quaternary structure, homodimer.

It is found in the cytoplasm. The protein localises to the nucleoid. In terms of biological role, binds to DNA and alters its conformation. May be involved in regulation of gene expression, nucleoid organization and DNA protection. The polypeptide is Nucleoid-associated protein Csac_1593 (Caldicellulosiruptor saccharolyticus (strain ATCC 43494 / DSM 8903 / Tp8T 6331)).